A 442-amino-acid polypeptide reads, in one-letter code: ATP-dependent protease ATPase subunit HslU (442 aa).

ATP is bound by residues Ile-18, 60–65 (GVGKTE), Asp-255, Glu-320, and Arg-392.

This sequence belongs to the ClpX chaperone family. HslU subfamily. A double ring-shaped homohexamer of HslV is capped on each side by a ring-shaped HslU homohexamer. The assembly of the HslU/HslV complex is dependent on binding of ATP.

The protein localises to the cytoplasm. Functionally, ATPase subunit of a proteasome-like degradation complex; this subunit has chaperone activity. The binding of ATP and its subsequent hydrolysis by HslU are essential for unfolding of protein substrates subsequently hydrolyzed by HslV. HslU recognizes the N-terminal part of its protein substrates and unfolds these before they are guided to HslV for hydrolysis. This is ATP-dependent protease ATPase subunit HslU from Aeromonas hydrophila subsp. hydrophila (strain ATCC 7966 / DSM 30187 / BCRC 13018 / CCUG 14551 / JCM 1027 / KCTC 2358 / NCIMB 9240 / NCTC 8049).